A 92-amino-acid polypeptide reads, in one-letter code: Co-chaperonin GroES (92 aa).

Belongs to the GroES chaperonin family. In terms of assembly, heptamer of 7 subunits arranged in a ring. Interacts with the chaperonin GroEL.

The protein resides in the cytoplasm. Functionally, together with the chaperonin GroEL, plays an essential role in assisting protein folding. The GroEL-GroES system forms a nano-cage that allows encapsulation of the non-native substrate proteins and provides a physical environment optimized to promote and accelerate protein folding. GroES binds to the apical surface of the GroEL ring, thereby capping the opening of the GroEL channel. In Methanosarcina mazei (strain ATCC BAA-159 / DSM 3647 / Goe1 / Go1 / JCM 11833 / OCM 88) (Methanosarcina frisia), this protein is Co-chaperonin GroES.